The chain runs to 2294 residues: Protein Ycf2 (2294 aa).

Residue 1635–1642 (GSIGTGRS) participates in ATP binding.

Belongs to the Ycf2 family.

It is found in the plastid. It localises to the chloroplast stroma. Functionally, probable ATPase of unknown function. Its presence in a non-photosynthetic plant (Epifagus virginiana) and experiments in tobacco indicate that it has an essential function which is probably not related to photosynthesis. The chain is Protein Ycf2 from Ranunculus macranthus (Large buttercup).